We begin with the raw amino-acid sequence, 274 residues long: Phosphoribosylaminoimidazole-succinocarboxamide synthase (274 aa).

This sequence belongs to the SAICAR synthetase family.

It carries out the reaction 5-amino-1-(5-phospho-D-ribosyl)imidazole-4-carboxylate + L-aspartate + ATP = (2S)-2-[5-amino-1-(5-phospho-beta-D-ribosyl)imidazole-4-carboxamido]succinate + ADP + phosphate + 2 H(+). Its pathway is purine metabolism; IMP biosynthesis via de novo pathway; 5-amino-1-(5-phospho-D-ribosyl)imidazole-4-carboxamide from 5-amino-1-(5-phospho-D-ribosyl)imidazole-4-carboxylate: step 1/2. In Nitrosopumilus maritimus (strain SCM1), this protein is Phosphoribosylaminoimidazole-succinocarboxamide synthase.